We begin with the raw amino-acid sequence, 254 residues long: Phosphoribosylaminoimidazole-succinocarboxamide synthase (254 aa).

It belongs to the SAICAR synthetase family.

The enzyme catalyses 5-amino-1-(5-phospho-D-ribosyl)imidazole-4-carboxylate + L-aspartate + ATP = (2S)-2-[5-amino-1-(5-phospho-beta-D-ribosyl)imidazole-4-carboxamido]succinate + ADP + phosphate + 2 H(+). The protein operates within purine metabolism; IMP biosynthesis via de novo pathway; 5-amino-1-(5-phospho-D-ribosyl)imidazole-4-carboxamide from 5-amino-1-(5-phospho-D-ribosyl)imidazole-4-carboxylate: step 1/2. In Sinorhizobium fredii (strain NBRC 101917 / NGR234), this protein is Phosphoribosylaminoimidazole-succinocarboxamide synthase.